A 1207-amino-acid polypeptide reads, in one-letter code: Ras GTPase-activating protein gap-2 (1207 aa).

Disordered regions lie at residues 1 to 29 (MKVIDEKPEDEEEEKDSGSKCKTPSSCTK) and 221 to 316 (RMSS…GSLR). The PH domain occupies 40-383 (PPICHGWLIV…WMENLRKTMN (344 aa)). Residues 223–236 (SSSSHNLSTRLSGS) show a composition bias toward low complexity. 2 stretches are compositionally biased toward polar residues: residues 237–247 (TQNLNQPTNAY) and 286–297 (ASNTPSRDSSLY). The C2 domain maps to 374 to 490 (WMENLRKTMN…SSRSPVERWY (117 aa)). The span at 495-504 (SHSDSGTSRI) shows a compositional bias: polar residues. Positions 495 to 516 (SHSDSGTSRIASALGGKSSSQE) are disordered. One can recognise a Ras-GAP domain in the interval 579–789 (NLAKEFLCDL…HRMKDFLLRI (211 aa)). Disordered stretches follow at residues 856 to 903 (GVFH…LGRS), 923 to 1013 (FQTP…SSSS), 1086 to 1107 (ATGGVNAQNRLSLPRTNPRASR), and 1163 to 1207 (LKSK…VVPN). Composition is skewed to polar residues over residues 862–876 (MVQQPSSDYENSPQQ) and 891–903 (TPPTGQATVLGRS). Residues 939–953 (TGTSSSRTSDKTTSS) show a composition bias toward low complexity. Positions 955–972 (EIRDDTDSDFELREDRGR) are enriched in basic and acidic residues. Residues 985–1013 (ASPSSSQQASSGYLSNNPSRSSYSNSSSS) show a composition bias toward low complexity. Residues 1181 to 1207 (SGASEDSYDSLSSLDRPSRQSLVVVPN) show a composition bias toward low complexity.

In terms of tissue distribution, mainly expressed in gonads and vulval cells. Isoform c in expressed in pharyngeal epithelial cells and several rectal/blast cells in the tail region. Isoform f is weakly expressed in four cells symmetrically located in the vulval region. Isoform g is strongly expressed in the pharyngeal muscle cells m6 in addition to several cells in the tail region.

It is found in the cytoplasm. GTPase-activating protein, which acts as a negative regulator for the member of the Ras family let-60. Probably decreases the signaling activity of Ras by stimulating its intrinsic GTPase activity, thereby lowering the levels of GTP-bound, active Ras. The different isoforms may play a distinct role in specific tissues. The polypeptide is Ras GTPase-activating protein gap-2 (gap-2) (Caenorhabditis elegans).